The primary structure comprises 378 residues: Chaperone protein DnaJ (378 aa).

The 68-residue stretch at 5–72 (DFYEVLGVPK…QKRAAYDQFG (68 aa)) folds into the J domain. Residues 138 to 216 (GKEAQIRIPS…CHGQGKVKKQ (79 aa)) form a CR-type zinc finger. Zn(2+) is bound by residues Cys-151, Cys-154, Cys-168, Cys-171, Cys-190, Cys-193, Cys-204, and Cys-207. 4 CXXCXGXG motif repeats span residues 151 to 158 (CETCHGSG), 168 to 175 (CTTCSGTG), 190 to 197 (CPHCRGTG), and 204 to 211 (CVTCHGQG). The segment at 354 to 378 (SLKKGGGKHSPSGESWTDRLKNLFT) is disordered. Positions 369-378 (WTDRLKNLFT) are enriched in basic and acidic residues.

Belongs to the DnaJ family. In terms of assembly, homodimer. The cofactor is Zn(2+).

It localises to the cytoplasm. Participates actively in the response to hyperosmotic and heat shock by preventing the aggregation of stress-denatured proteins and by disaggregating proteins, also in an autonomous, DnaK-independent fashion. Unfolded proteins bind initially to DnaJ; upon interaction with the DnaJ-bound protein, DnaK hydrolyzes its bound ATP, resulting in the formation of a stable complex. GrpE releases ADP from DnaK; ATP binding to DnaK triggers the release of the substrate protein, thus completing the reaction cycle. Several rounds of ATP-dependent interactions between DnaJ, DnaK and GrpE are required for fully efficient folding. Also involved, together with DnaK and GrpE, in the DNA replication of plasmids through activation of initiation proteins. The chain is Chaperone protein DnaJ from Paracidovorax citrulli (strain AAC00-1) (Acidovorax citrulli).